Here is a 54-residue protein sequence, read N- to C-terminus: Small ribosomal subunit protein uS14 (54 aa).

4 residues coordinate Zn(2+): C19, C22, C37, and C40.

It belongs to the universal ribosomal protein uS14 family. Zinc-binding uS14 subfamily. As to quaternary structure, part of the 30S ribosomal subunit. The cofactor is Zn(2+).

In terms of biological role, binds 16S rRNA, required for the assembly of 30S particles. The polypeptide is Small ribosomal subunit protein uS14 (Aeropyrum pernix (strain ATCC 700893 / DSM 11879 / JCM 9820 / NBRC 100138 / K1)).